Here is a 459-residue protein sequence, read N- to C-terminus: Serine--tRNA ligase (459 aa).

L-serine is bound at residue 254–256 (TAE). ATP contacts are provided by residues 285–287 (RKE) and Val-301. Position 308 (Glu-308) interacts with L-serine. An ATP-binding site is contributed by 372–375 (EMVS). Thr-408 provides a ligand contact to L-serine.

This sequence belongs to the class-II aminoacyl-tRNA synthetase family. Type-1 seryl-tRNA synthetase subfamily. As to quaternary structure, homodimer. The tRNA molecule binds across the dimer.

Its subcellular location is the cytoplasm. It carries out the reaction tRNA(Ser) + L-serine + ATP = L-seryl-tRNA(Ser) + AMP + diphosphate + H(+). The catalysed reaction is tRNA(Sec) + L-serine + ATP = L-seryl-tRNA(Sec) + AMP + diphosphate + H(+). It participates in aminoacyl-tRNA biosynthesis; selenocysteinyl-tRNA(Sec) biosynthesis; L-seryl-tRNA(Sec) from L-serine and tRNA(Sec): step 1/1. Catalyzes the attachment of serine to tRNA(Ser). Is also able to aminoacylate tRNA(Sec) with serine, to form the misacylated tRNA L-seryl-tRNA(Sec), which will be further converted into selenocysteinyl-tRNA(Sec). The chain is Serine--tRNA ligase from Staphylothermus marinus (strain ATCC 43588 / DSM 3639 / JCM 9404 / F1).